We begin with the raw amino-acid sequence, 191 residues long: UPF0149 protein VV2847 (191 aa).

It belongs to the UPF0149 family.

The protein is UPF0149 protein VV2847 of Vibrio vulnificus (strain YJ016).